A 169-amino-acid polypeptide reads, in one-letter code: Cell division inhibitor SulA (169 aa).

Residues A106–Y112 form a ftsZ binding region. The interval K162 to H169 is lon protease binding.

Belongs to the SulA family. As to quaternary structure, interacts with FtsZ. Post-translationally, is rapidly cleaved and degraded by the Lon protease once DNA damage is repaired.

In terms of biological role, component of the SOS system and an inhibitor of cell division. Accumulation of SulA causes rapid cessation of cell division and the appearance of long, non-septate filaments. In the presence of GTP, binds a polymerization-competent form of FtsZ in a 1:1 ratio, thus inhibiting FtsZ polymerization and therefore preventing it from participating in the assembly of the Z ring. This mechanism prevents the premature segregation of damaged DNA to daughter cells during cell division. This is Cell division inhibitor SulA from Shigella boydii serotype 18 (strain CDC 3083-94 / BS512).